A 248-amino-acid polypeptide reads, in one-letter code: Probable transcriptional regulatory protein OCAR_7305/OCA5_c08120 (248 aa).

Belongs to the TACO1 family.

The protein resides in the cytoplasm. This Afipia carboxidovorans (strain ATCC 49405 / DSM 1227 / KCTC 32145 / OM5) (Oligotropha carboxidovorans) protein is Probable transcriptional regulatory protein OCAR_7305/OCA5_c08120.